Consider the following 245-residue polypeptide: 8-amino-3,8-dideoxy-manno-octulosonate cytidylyltransferase (245 aa).

It belongs to the KdsB family.

It localises to the cytoplasm. It carries out the reaction 8-amino-3,8-dideoxy-alpha-D-manno-octulosonate + CTP = CMP-8-amino-3,8-dideoxy-alpha-D-manno-oct-2-ulosonate + diphosphate. It functions in the pathway bacterial outer membrane biogenesis; lipopolysaccharide biosynthesis. In terms of biological role, activates KDO8N (a required 8-carbon sugar) for incorporation into bacterial lipopolysaccharide in the Shewanella genus. The polypeptide is 8-amino-3,8-dideoxy-manno-octulosonate cytidylyltransferase (Shewanella oneidensis (strain ATCC 700550 / JCM 31522 / CIP 106686 / LMG 19005 / NCIMB 14063 / MR-1)).